The following is a 223-amino-acid chain: 7-cyano-7-deazaguanine synthase (223 aa).

15 to 25 (FSGGQDSTTCL) contributes to the ATP binding site. Residues Cys-191, Cys-200, Cys-203, and Cys-206 each coordinate Zn(2+).

Belongs to the QueC family. Homodimer. Requires Zn(2+) as cofactor.

It carries out the reaction 7-carboxy-7-deazaguanine + NH4(+) + ATP = 7-cyano-7-deazaguanine + ADP + phosphate + H2O + H(+). Its pathway is purine metabolism; 7-cyano-7-deazaguanine biosynthesis. In terms of biological role, catalyzes the ATP-dependent conversion of 7-carboxy-7-deazaguanine (CDG) to 7-cyano-7-deazaguanine (preQ(0)). This is 7-cyano-7-deazaguanine synthase from Staphylococcus haemolyticus (strain JCSC1435).